The following is a 454-amino-acid chain: tRNA modification GTPase MnmE (454 aa).

(6S)-5-formyl-5,6,7,8-tetrahydrofolate-binding residues include R23, E80, and K120. The 162-residue stretch at 216-377 (GMKVVIAGRP…LRNHLKQSMG (162 aa)) folds into the TrmE-type G domain. N226 contacts K(+). Residues 226-231 (NAGKSS), 245-251 (TDIAGTT), 270-273 (DTAG), 335-338 (NKAD), and 358-360 (SAR) contribute to the GTP site. A Mg(2+)-binding site is contributed by S230. 3 residues coordinate K(+): T245, I247, and T250. T251 lines the Mg(2+) pocket. Residue K454 participates in (6S)-5-formyl-5,6,7,8-tetrahydrofolate binding.

The protein belongs to the TRAFAC class TrmE-Era-EngA-EngB-Septin-like GTPase superfamily. TrmE GTPase family. Homodimer. Heterotetramer of two MnmE and two MnmG subunits. K(+) is required as a cofactor.

The protein resides in the cytoplasm. Exhibits a very high intrinsic GTPase hydrolysis rate. Involved in the addition of a carboxymethylaminomethyl (cmnm) group at the wobble position (U34) of certain tRNAs, forming tRNA-cmnm(5)s(2)U34. This chain is tRNA modification GTPase MnmE, found in Citrobacter koseri (strain ATCC BAA-895 / CDC 4225-83 / SGSC4696).